Consider the following 179-residue polypeptide: uncharacterized protein (179 aa).

It localises to the plastid. It is found in the cyanelle. This is an uncharacterized protein from Cyanophora paradoxa.